The chain runs to 156 residues: Transcription inhibitor protein Gfh1 (156 aa).

Residues 1–74 (MAREVKLTKA…LEDILSRAVI (74 aa)) adopt a coiled-coil conformation. Residues Glu20 and Glu24 each coordinate Zn(2+).

The protein belongs to the GreA/GreB family. As to quaternary structure, interacts with RNAP.

Its function is as follows. Inhibits all catalytic activities of RNA polymerase (RNAP) by partially occluding its substrate-binding site and preventing NTP binding. This Thermus thermophilus (strain ATCC 27634 / DSM 579 / HB8) protein is Transcription inhibitor protein Gfh1 (gfh1).